The following is a 550-amino-acid chain: Cytochrome P450 monooxygenase FFUJ_09176 (550 aa).

Residues 1-31 (MLQTIPMPSRELTIALAVLSLLMVLVQRAGS) form the signal peptide. Positions 430 to 441 (FIPERFEGDTRS) are enriched in basic and acidic residues. The tract at residues 430 to 451 (FIPERFEGDTRSSQESAASPDV) is disordered. Cysteine 466 serves as a coordination point for heme.

It belongs to the cytochrome P450 family.

Cytochrome P450 monooxygenase; part of the DMATS1 gene cluster that mediates the biosynthesis of a reversely N-prenylated monomeric L-tryptophan (r-N-DMAT). Seems not to contribute to the final DMATS1 product. The protein is Cytochrome P450 monooxygenase FFUJ_09176 of Gibberella fujikuroi (strain CBS 195.34 / IMI 58289 / NRRL A-6831) (Bakanae and foot rot disease fungus).